The primary structure comprises 230 residues: A-type ATP synthase subunit D (230 aa).

The disordered stretch occupies residues 204-230 (AKKEEEEDALAAEEEAEEEPEAVTADD). A compositionally biased stretch (acidic residues) spans 208 to 230 (EEEDALAAEEEAEEEPEAVTADD).

Belongs to the V-ATPase D subunit family. As to quaternary structure, has multiple subunits with at least A(3), B(3), C, D, E, F, H, I and proteolipid K(x).

Its subcellular location is the cell membrane. Functionally, component of the A-type ATP synthase that produces ATP from ADP in the presence of a proton gradient across the membrane. This is A-type ATP synthase subunit D from Haloarcula marismortui (strain ATCC 43049 / DSM 3752 / JCM 8966 / VKM B-1809) (Halobacterium marismortui).